Here is a 430-residue protein sequence, read N- to C-terminus: Histidinol dehydrogenase (430 aa).

Residues tyrosine 130, glutamine 191, and asparagine 214 each coordinate NAD(+). Substrate contacts are provided by serine 237, glutamine 259, and histidine 262. Residues glutamine 259 and histidine 262 each contribute to the Zn(2+) site. Catalysis depends on proton acceptor residues glutamate 327 and histidine 328. Substrate contacts are provided by histidine 328, aspartate 361, glutamate 415, and histidine 420. Aspartate 361 serves as a coordination point for Zn(2+). A Zn(2+)-binding site is contributed by histidine 420.

It belongs to the histidinol dehydrogenase family. Requires Zn(2+) as cofactor.

The enzyme catalyses L-histidinol + 2 NAD(+) + H2O = L-histidine + 2 NADH + 3 H(+). It functions in the pathway amino-acid biosynthesis; L-histidine biosynthesis; L-histidine from 5-phospho-alpha-D-ribose 1-diphosphate: step 9/9. In terms of biological role, catalyzes the sequential NAD-dependent oxidations of L-histidinol to L-histidinaldehyde and then to L-histidine. The sequence is that of Histidinol dehydrogenase (hisD) from Zymomonas mobilis subsp. mobilis (strain ATCC 31821 / ZM4 / CP4).